The following is a 453-amino-acid chain: Ribosomal protein uS12 methylthiotransferase RimO (453 aa).

Residues 9-124 (PKVGFVSLGC…VMEAVHTHLP (116 aa)) form the MTTase N-terminal domain. 6 residues coordinate [4Fe-4S] cluster: Cys-18, Cys-54, Cys-83, Cys-155, Cys-159, and Cys-162. In terms of domain architecture, Radical SAM core spans 141–382 (LTPKHYAYLK…MEVAERVSAR (242 aa)). In terms of domain architecture, TRAM spans 385-453 (QRKVGKTLRV…ADGHDLWGEV (69 aa)).

This sequence belongs to the methylthiotransferase family. RimO subfamily. [4Fe-4S] cluster is required as a cofactor.

It localises to the cytoplasm. The catalysed reaction is L-aspartate(89)-[ribosomal protein uS12]-hydrogen + (sulfur carrier)-SH + AH2 + 2 S-adenosyl-L-methionine = 3-methylsulfanyl-L-aspartate(89)-[ribosomal protein uS12]-hydrogen + (sulfur carrier)-H + 5'-deoxyadenosine + L-methionine + A + S-adenosyl-L-homocysteine + 2 H(+). Its function is as follows. Catalyzes the methylthiolation of an aspartic acid residue of ribosomal protein uS12. The sequence is that of Ribosomal protein uS12 methylthiotransferase RimO from Ralstonia nicotianae (strain ATCC BAA-1114 / GMI1000) (Ralstonia solanacearum).